The primary structure comprises 635 residues: DNA mismatch repair protein MutL (635 aa).

The segment at 359–399 (GTNKYAQPEAAKSSAAEQAVARERSSARERAAPAYKEDHPY) is disordered. Over residues 364 to 377 (AQPEAAKSSAAEQA) the composition is skewed to low complexity. Positions 378–399 (VARERSSARERAAPAYKEDHPY) are enriched in basic and acidic residues.

This sequence belongs to the DNA mismatch repair MutL/HexB family.

In terms of biological role, this protein is involved in the repair of mismatches in DNA. It is required for dam-dependent methyl-directed DNA mismatch repair. May act as a 'molecular matchmaker', a protein that promotes the formation of a stable complex between two or more DNA-binding proteins in an ATP-dependent manner without itself being part of a final effector complex. The chain is DNA mismatch repair protein MutL from Yersinia pestis bv. Antiqua (strain Antiqua).